Here is a 213-residue protein sequence, read N- to C-terminus: N-(5'-phosphoribosyl)anthranilate isomerase (213 aa).

Belongs to the TrpF family.

It carries out the reaction N-(5-phospho-beta-D-ribosyl)anthranilate = 1-(2-carboxyphenylamino)-1-deoxy-D-ribulose 5-phosphate. It participates in amino-acid biosynthesis; L-tryptophan biosynthesis; L-tryptophan from chorismate: step 3/5. This chain is N-(5'-phosphoribosyl)anthranilate isomerase, found in Methanocella arvoryzae (strain DSM 22066 / NBRC 105507 / MRE50).